We begin with the raw amino-acid sequence, 651 residues long: Bromodomain-containing protein 7 (651 aa).

A Glycyl lysine isopeptide (Lys-Gly) (interchain with G-Cter in SUMO2) cross-link involves residue K21. The span at 35–45 (TELSTGSSGHD) shows a compositional bias: polar residues. The disordered stretch occupies residues 35-132 (TELSTGSSGH…SSLAKQEEVE (98 aa)). Positions 47–57 (SLFEDKNDHDK) are enriched in basic and acidic residues. K52 is covalently cross-linked (Glycyl lysine isopeptide (Lys-Gly) (interchain with G-Cter in SUMO2)). Over residues 58–69 (HKDRKRKKRKKG) the composition is skewed to basic residues. Residues 65 to 96 (KRKKGEKQIPGEEKGRKRRRVKEDKKKRDRDR) carry the Nuclear localization signal motif. Residues 70–106 (EKQIPGEEKGRKRRRVKEDKKKRDRDRVENEAEKDLQ) show a composition bias toward basic and acidic residues. Residues K127, K186, K197, K201, K212, and K241 each participate in a glycyl lysine isopeptide (Lys-Gly) (interchain with G-Cter in SUMO2) cross-link. The Bromo domain maps to 131-235 (VEQTPLQEAL…HSGMKILSQE (105 aa)). The disordered stretch occupies residues 253–301 (TRKQKDGTDTSQSGEDGGCWQREREDSGDAEAHAFKSPSKENKKKDKDM). The segment covering 273–301 (QREREDSGDAEAHAFKSPSKENKKKDKDM) has biased composition (basic and acidic residues). Residues S279 and S289 each carry the phosphoserine modification. Glycyl lysine isopeptide (Lys-Gly) (interchain with G-Cter in SUMO2) cross-links involve residues K305 and K307. Position 328 is an N6-acetyllysine (K328). K344 participates in a covalent cross-link: Glycyl lysine isopeptide (Lys-Gly) (interchain with G-Cter in SUMO2). S380 is modified (phosphoserine). K389 is covalently cross-linked (Glycyl lysine isopeptide (Lys-Gly) (interchain with G-Cter in SUMO2)). Position 482 is a phosphoserine (S482). A Phosphothreonine modification is found at T514. Residues 536 to 567 (SEEAEIFQKKLDETTRLLRELQEAQNERLSTR) are a coiled coil. Phosphoserine is present on S621.

Interacts with TRIM24, PTPN13 and DVL1. Identified in a complex with SMARCA4/BRG1, SMARCC1/BAF155, SMARCE1/BAF57, DPF2/BAF45D and ARID2, subunits of the SWI/SNF-B (PBAF) chromatin remodeling complex. Interacts with IRF2 and HNRPUL1. Interacts (via N-terminus) with TP53. Interacts (via C-terminus) with EP300. Interacts with BRCA1. Interacts (via bromo domain) with histone H3 (via N-terminus) acetylated at 'Lys-14' (H3K14ac). Has low affinity for histone H3 acetylated at 'Lys-9' (H3K9ac). Has the highest affinity for histone H3 that is acetylated both at 'Lys-9' (H3K9ac) and at 'Lys-14' (H3K14ac). Has very low affinity for non-acetylated histone H3. Interacts (via bromo domain) with histone H4 (via N-terminus) acetylated at 'Lys-8' (H3K8ac) (in vitro).

The protein resides in the nucleus. The protein localises to the chromosome. Acts both as coactivator and as corepressor. May play a role in chromatin remodeling. Activator of the Wnt signaling pathway in a DVL1-dependent manner by negatively regulating the GSK3B phosphotransferase activity. Induces dephosphorylation of GSK3B at 'Tyr-216'. Down-regulates TRIM24-mediated activation of transcriptional activation by AR. Transcriptional corepressor that down-regulates the expression of target genes. Binds to target promoters, leading to increased histone H3 acetylation at 'Lys-9' (H3K9ac). Binds to the ESR1 promoter. Recruits BRCA1 and POU2F1 to the ESR1 promoter. Coactivator for TP53-mediated activation of transcription of a set of target genes. Required for TP53-mediated cell-cycle arrest in response to oncogene activation. Promotes acetylation of TP53 at 'Lys-382', and thereby promotes efficient recruitment of TP53 to target promoters. Inhibits cell cycle progression from G1 to S phase. The sequence is that of Bromodomain-containing protein 7 (BRD7) from Homo sapiens (Human).